A 558-amino-acid polypeptide reads, in one-letter code: Cyclomaltodextrinase (558 aa).

The Ca(2+) site is built by Asn-143, Gly-168, and Asp-170. Substrate is bound by residues His-243 and Arg-323. Catalysis depends on Asp-325, which acts as the Nucleophile. The active-site Proton donor is Glu-354. Residues 420 to 421, Asp-465, and Arg-469 contribute to the substrate site; that span reads HD.

Belongs to the glycosyl hydrolase 13 family. Monomer. Depending on the pH of the solution, exists as a monomer, a homodimer or as an assembly of six homodimers forming a dodecamer, which is catalytically the most efficient form of the enzyme. Ca(2+) serves as cofactor.

The catalysed reaction is cyclomaltodextrin + H2O = linear maltodextrin. It carries out the reaction Hydrolysis of pullulan to panose (6-alpha-D-glucosylmaltose).. Hydrolysis of beta-cyclodextrin is inhibited by Cu(2+), Zn(2+) and Ag(+), and activated by Ca(2+), EGTA and EDTA. Activity is increased over twofold in the presence of 5 mM EDTA. Competitively inhibited by acarbose and methyl 6-amino-6-deoxy-alpha-D-glucopyranoside by reducing the rate of the ring opening step of the reaction. Its function is as follows. Hydrolyzes alpha-, beta- and gamma-cyclodextrins and the resulting linear maltodextrins, with the highest activity with beta-cyclodextrin (cyclomaltoheptaose). Soluble starch is hydrolyzed slowly, but it is nevertheless preferred over pullulan as a substrate. Is able to hydrolyze amylose and amylopectin, with a very strong preference for amylose, with maltose and glucose as the main products. Maltose and glucose are the main hydrolysis products of cyclomaltodextrins, maltodextrins and starch, whereas panose is the main hydrolysis product of pullulan. Acarbose is partially hydrolyzed to glucose and pseudotrisaccharide. No activity with maltose as substrate. Has transglycosylating activity with high concentrations of maltotriose, maltotetraose and starch. This chain is Cyclomaltodextrinase, found in Bacillus sp.